A 125-amino-acid chain; its full sequence is Egg cell-secreted protein 1.3 (125 aa).

Residues 1–24 (MASNTSFLFVTVTLLLVLNVSSRA) form the signal peptide.

It belongs to the plant egg cell-secreted peptide family. Restricted to female reproductive tissues, specifically accumulating in storage vesicles of the unfertilized egg cell.

Its subcellular location is the cytoplasmic vesicle. The protein localises to the secreted. In terms of biological role, involved in the regulation of gamete interactions during the double fertilization and to prevent multiple-pollen tube attraction; mediates the redistribution of the gamete fusogen HAP2/GCS1 to the cell surface after secretion upon sperm arrival. The sequence is that of Egg cell-secreted protein 1.3 (EC1.3) from Arabidopsis thaliana (Mouse-ear cress).